Consider the following 258-residue polypeptide: Proliferating cell nuclear antigen (258 aa).

Residues 61 to 80 (RCDHPVTLGMDLTSLSKILR) mediate DNA binding. Lysine 127 is covalently cross-linked (Glycyl lysine isopeptide (Lys-Gly) (interchain with G-Cter in SUMO)). Lysine 164 participates in a covalent cross-link: Glycyl lysine isopeptide (Lys-Gly) (interchain with G-Cter in SUMO); alternate. Lysine 164 is covalently cross-linked (Glycyl lysine isopeptide (Lys-Gly) (interchain with G-Cter in ubiquitin); alternate).

This sequence belongs to the PCNA family. In terms of assembly, homotrimer. Interacts with RAD30. Interacts with MCM10. Interacts with UBP10. Post-translationally, sumoylated on Lys-164, and to a lesser extent on Lys-127 by the UBC9/SIZ1 complex during S-phase; which impairs ubiquitination and function in DNA repair. In terms of processing, monoubiquitinated on Lys-164 by the UBC2/RAD18 complex upon DNA damage, and then polyubiquitinated through 'Lys-63'-linkage by UBC13/MMS2. Ubiquitination is required for UBC2-mediated DNA repair. Lys-164 is deubiquitinated by UBP10.

The protein resides in the nucleus. Its function is as follows. This protein is an auxiliary protein of DNA polymerase delta and is involved in the control of eukaryotic DNA replication by increasing the polymerase's processibility during elongation of the leading strand. Involved in DNA repair. This is Proliferating cell nuclear antigen (POL30) from Saccharomyces cerevisiae (strain ATCC 204508 / S288c) (Baker's yeast).